The chain runs to 408 residues: UPF0754 membrane protein Tery_3973 (408 aa).

The next 2 helical transmembrane spans lie at 4–24 (IWLY…TNDI) and 385–405 (IVNL…ILLV).

It belongs to the UPF0754 family.

It is found in the cell inner membrane. This chain is UPF0754 membrane protein Tery_3973, found in Trichodesmium erythraeum (strain IMS101).